The sequence spans 118 residues: Small ribosomal subunit protein uS13 (118 aa).

The disordered stretch occupies residues 94-118 (SLPLRGQRTKTNARTRKGPRKPIKK).

It belongs to the universal ribosomal protein uS13 family. Part of the 30S ribosomal subunit. Forms a loose heterodimer with protein S19. Forms two bridges to the 50S subunit in the 70S ribosome.

In terms of biological role, located at the top of the head of the 30S subunit, it contacts several helices of the 16S rRNA. In the 70S ribosome it contacts the 23S rRNA (bridge B1a) and protein L5 of the 50S subunit (bridge B1b), connecting the 2 subunits; these bridges are implicated in subunit movement. Contacts the tRNAs in the A and P-sites. This is Small ribosomal subunit protein uS13 from Aliivibrio fischeri (strain ATCC 700601 / ES114) (Vibrio fischeri).